Here is a 104-residue protein sequence, read N- to C-terminus: Large ribosomal subunit protein uL23 (104 aa).

It belongs to the universal ribosomal protein uL23 family. Part of the 50S ribosomal subunit. Contacts protein L29, and trigger factor when it is bound to the ribosome.

Functionally, one of the early assembly proteins it binds 23S rRNA. One of the proteins that surrounds the polypeptide exit tunnel on the outside of the ribosome. Forms the main docking site for trigger factor binding to the ribosome. The polypeptide is Large ribosomal subunit protein uL23 (Polynucleobacter necessarius subsp. necessarius (strain STIR1)).